Here is a 178-residue protein sequence, read N- to C-terminus: Large ribosomal subunit protein bL25 (178 aa).

This sequence belongs to the bacterial ribosomal protein bL25 family. CTC subfamily. As to quaternary structure, part of the 50S ribosomal subunit; part of the 5S rRNA/L5/L18/L25 subcomplex. Contacts the 5S rRNA. Binds to the 5S rRNA independently of L5 and L18.

This is one of the proteins that binds to the 5S RNA in the ribosome where it forms part of the central protuberance. The sequence is that of Large ribosomal subunit protein bL25 from Sulfurimonas denitrificans (strain ATCC 33889 / DSM 1251) (Thiomicrospira denitrificans (strain ATCC 33889 / DSM 1251)).